A 105-amino-acid polypeptide reads, in one-letter code: Small ribosomal subunit protein uS10 (105 aa).

Belongs to the universal ribosomal protein uS10 family. Part of the 30S ribosomal subunit.

Its function is as follows. Involved in the binding of tRNA to the ribosomes. This is Small ribosomal subunit protein uS10 from Rickettsia bellii (strain OSU 85-389).